We begin with the raw amino-acid sequence, 85 residues long: Large ribosomal subunit protein bL27 (85 aa).

Residues 1-21 form a disordered region; that stretch reads MAHKKGGGTTRNGRDSESKRL.

The protein belongs to the bacterial ribosomal protein bL27 family.

The sequence is that of Large ribosomal subunit protein bL27 from Janthinobacterium sp. (strain Marseille) (Minibacterium massiliensis).